The sequence spans 126 residues: Type II methyltransferase M.HgiGI (126 aa).

The SAM-dependent MTase C5-type domain maps to methionine 1–alanine 126. Residue cysteine 75 is part of the active site.

It belongs to the class I-like SAM-binding methyltransferase superfamily. C5-methyltransferase family.

It carries out the reaction a 2'-deoxycytidine in DNA + S-adenosyl-L-methionine = a 5-methyl-2'-deoxycytidine in DNA + S-adenosyl-L-homocysteine + H(+). Functionally, a methylase, recognizes the double-stranded sequence 5'-GRCGYC-3', methylates C-? on both strands, and protects the DNA from cleavage by the HgiEI endonuclease. In Herpetosiphon aurantiacus (Herpetosiphon giganteus), this protein is Type II methyltransferase M.HgiGI.